The primary structure comprises 97 residues: Large ribosomal subunit protein eL21 (97 aa).

Residues 1 to 26 (MQKSEGFRSKTRYKLQKHPRQKGMAP) form a disordered region. Residues 9–21 (SKTRYKLQKHPRQ) show a composition bias toward basic residues.

Belongs to the eukaryotic ribosomal protein eL21 family.

The sequence is that of Large ribosomal subunit protein eL21 from Methanococcus maripaludis (strain C5 / ATCC BAA-1333).